A 1266-amino-acid chain; its full sequence is Neuronal-glial cell adhesion molecule (1266 aa).

Residues 1–20 (MALPMVGLLLLLLLGGPGAA) form the signal peptide. Residues 21–1130 (ITIPPEYGAH…PQPGGGVCTK (1110 aa)) are Extracellular-facing. 6 Ig-like C2-type domains span residues 36-128 (PELT…NVIA), 135-221 (PKEK…KEPL), 236-322 (PRLL…HSVT), 327-413 (PYWV…AFLH), 418-506 (PLRM…ALLE), and 510-597 (PTRI…AQLR). 4 disulfides stabilise this stretch: cysteine 58/cysteine 110, cysteine 154/cysteine 205, cysteine 260/cysteine 306, and cysteine 348/cysteine 397. The N-linked (GlcNAc...) asparagine glycan is linked to asparagine 97. N-linked (GlcNAc...) asparagine glycosylation is found at asparagine 288, asparagine 390, asparagine 434, asparagine 472, and asparagine 498. Cysteine 441 and cysteine 490 form a disulfide bridge. An intrachain disulfide couples cysteine 532 to cysteine 581. Fibronectin type-III domains lie at 603–698 (PSRD…TPPA), 700–804 (PERN…SGED), 809–930 (YPEN…TPEG), 934–1021 (PPEE…TKPE), and 1022–1118 (PPSP…TNGT). The tract at residues 685 to 710 (EHHAPSAPIETPPAAPERNPGGVHGE) is disordered. N-linked (GlcNAc...) asparagine glycosylation is found at asparagine 712 and asparagine 819. Positions 857–882 (SRRQAPPDPPQIPQSPAEDPPPFPPV) are disordered. The segment covering 862-881 (PPDPPQIPQSPAEDPPPFPP) has biased composition (pro residues). Residues 914–916 (RGD) carry the Cell attachment site motif. The tract at residues 1004-1025 (STPRERPALQTVGSTKPEPPSP) is disordered. 4 N-linked (GlcNAc...) asparagine glycosylation sites follow: asparagine 1061, asparagine 1075, asparagine 1100, and asparagine 1116. A helical transmembrane segment spans residues 1131 to 1153 (GWFIGFVSSVVLLLLILLILCFI). Residues 1154–1266 (KRSKGGKYSV…ASPCAGPPLD (113 aa)) lie on the Cytoplasmic side of the membrane. Basic and acidic residues predominate over residues 1163–1195 (VKDKEDTQVDSEARPMKDETFGEYRSLESEAEK). The segment at 1163-1266 (VKDKEDTQVD…ASPCAGPPLD (104 aa)) is disordered. Gly residues predominate over residues 1199–1211 (SGSGAGSGVGSPG).

It belongs to the immunoglobulin superfamily. L1/neurofascin/NgCAM family. Binds to itself and to axonin 1. In terms of tissue distribution, brain.

It localises to the cell membrane. Functionally, mediates the adhesion of neurons to neurons and neurons to glia. It is involved in neuronal migration, neurite fasciculation and outgrowth. This Gallus gallus (Chicken) protein is Neuronal-glial cell adhesion molecule.